The primary structure comprises 594 residues: UvrABC system protein C (594 aa).

In terms of domain architecture, GIY-YIG spans 14–91 (DQPGCYLMKD…IKKHDPKYNI (78 aa)). The UVR domain occupies 196–231 (KEVRSELETKMYEASEKLEFERAKELRDQIAHIDAI).

The protein belongs to the UvrC family. In terms of assembly, interacts with UvrB in an incision complex.

The protein localises to the cytoplasm. The UvrABC repair system catalyzes the recognition and processing of DNA lesions. UvrC both incises the 5' and 3' sides of the lesion. The N-terminal half is responsible for the 3' incision and the C-terminal half is responsible for the 5' incision. In Bacillus cereus (strain AH187), this protein is UvrABC system protein C.